The chain runs to 120 residues: Flagellar protein FliT (120 aa).

The segment at 1–50 (MNDFISSLNNWQALYALSNTMLSLANSGQWDELIEQEVKYVTLVEAIARN) is required for homodimerization. The tract at residues 59–97 (FQEKARELLTKVLANEAALKIKLQARMEELRVLIEQNGN) is fliD binding.

Belongs to the FliT family. In terms of assembly, homodimer. Interacts with FliD and FlhC.

The protein localises to the cytoplasm. It localises to the cytosol. Its function is as follows. Dual-function protein that regulates the transcription of class 2 flagellar operons and that also acts as an export chaperone for the filament-capping protein FliD. As a transcriptional regulator, acts as an anti-FlhDC factor; it directly binds FlhC, thus inhibiting the binding of the FlhC/FlhD complex to class 2 promoters, resulting in decreased expression of class 2 flagellar operons. As a chaperone, effects FliD transition to the membrane by preventing its premature polymerization, and by directing it to the export apparatus. In Cronobacter sakazakii (strain ATCC BAA-894) (Enterobacter sakazakii), this protein is Flagellar protein FliT.